Reading from the N-terminus, the 495-residue chain is Mothers against decapentaplegic homolog 6 (495 aa).

The segment covering 1-15 (MFRSKRSGLVRRLWR) has biased composition (basic residues). Disordered regions lie at residues 1–115 (MFRS…PGWL) and 133–161 (AAGAPRDSGDPQARQSPEPEEGGGPRSRE). 2 positions are modified to dimethylated arginine; alternate: arginine 74 and arginine 81. Omega-N-methylarginine; alternate is present on residues arginine 74 and arginine 81. In terms of domain architecture, MH1 spans 149–276 (PEPEEGGGPR…FSRLCGPESP (128 aa)). A Glycyl lysine isopeptide (Lys-Gly) (interchain with G-Cter in ubiquitin) cross-link involves residue lysine 174. Zn(2+) is bound by residues cysteine 206, cysteine 248, cysteine 261, and histidine 266. Residues 332 to 495 (WCSVAYWEHR…WLEILLNNHR (164 aa)) enclose the MH2 domain. The residue at position 436 (serine 436) is a Phosphoserine; by PRKX; in vitro.

The protein belongs to the dwarfin/SMAD family. In terms of assembly, interacts with NEDD4L. Interacts with WWP1. Interacts with STAMBP and PRKX. Interacts with RNF111 and AXIN1. Interacts with TGF-beta type I receptor superfamily members, including ACVR1B, BMPR1B and TGFBR1. In response to BMP2 treatment, interacts with SMAD1; this interaction may inhibit SMAD1-binding to SMAD4. Interacts with HOXC8 and HOXC9. Interacts with PELI1; this interaction interferes with PELI1 complex formation with TRAF6, IRAK1, IRAK4 and MYD88 in response to IL1B and hence negatively regulates IL1R-TLR signaling. Interacts with TSC22D1/TSC-22. Post-translationally, monoubiquitinated at Lys-174 by the E2/E3 hybrid ubiquitin-protein ligase UBE2O, leading to reduced binding affinity for the activated BMP type I receptor ACVR1/ALK2, thereby enhancing BMP7 and regulating adipocyte differentiation. Ubiquitinated by WWP1. Ubiquitinated by ARK2C, promoting proteasomal degradation, leading to enhance the BMP-Smad signaling. Arginine methylation by PRMT1, which is recruited by BMPR2, initiates BMP-Induced signaling and induces dissociation from the BMPR1B receptor at the cell surface leading to derepress downstream Smad1/Smad5 signaling. In terms of processing, phosphorylated by BMP type 1 receptor kinase and by PRKX. As to expression, ubiquitous in various organs, with higher levels in lung.

It is found in the nucleus. Functionally, transforming growth factor-beta superfamily receptors signaling occurs through the Smad family of intracellular mediators. SMAD6 is an inhibitory Smad (i-Smad) that negatively regulates signaling downstream of type I transforming growth factor-beta. Acts as a mediator of TGF-beta and BMP anti-inflammatory activities. Suppresses IL1R-TLR signaling through its direct interaction with PEL1, preventing NF-kappa-B activation, nuclear transport and NF-kappa-B-mediated expression of pro-inflammatory genes. Blocks the BMP-SMAD1 signaling pathway by competing with SMAD4 for receptor-activated SMAD1-binding. Binds to regulatory elements in target promoter regions. The protein is Mothers against decapentaplegic homolog 6 (Smad6) of Mus musculus (Mouse).